The sequence spans 295 residues: Ribosomal RNA small subunit methyltransferase H (295 aa).

S-adenosyl-L-methionine contacts are provided by residues 32–34, Asp50, Phe77, Asp98, and Gln105; that span reads GGY. The segment at 275–295 is disordered; the sequence is KEISENTRSRSAKLRGIVKEE.

It belongs to the methyltransferase superfamily. RsmH family.

It is found in the cytoplasm. It carries out the reaction cytidine(1402) in 16S rRNA + S-adenosyl-L-methionine = N(4)-methylcytidine(1402) in 16S rRNA + S-adenosyl-L-homocysteine + H(+). Its function is as follows. Specifically methylates the N4 position of cytidine in position 1402 (C1402) of 16S rRNA. The chain is Ribosomal RNA small subunit methyltransferase H from Anaplasma phagocytophilum (strain HZ).